The chain runs to 350 residues: Histidinol-phosphate aminotransferase (350 aa).

K207 carries the post-translational modification N6-(pyridoxal phosphate)lysine.

Belongs to the class-II pyridoxal-phosphate-dependent aminotransferase family. Histidinol-phosphate aminotransferase subfamily. As to quaternary structure, homodimer. It depends on pyridoxal 5'-phosphate as a cofactor.

It catalyses the reaction L-histidinol phosphate + 2-oxoglutarate = 3-(imidazol-4-yl)-2-oxopropyl phosphate + L-glutamate. It participates in amino-acid biosynthesis; L-histidine biosynthesis; L-histidine from 5-phospho-alpha-D-ribose 1-diphosphate: step 7/9. The chain is Histidinol-phosphate aminotransferase from Streptococcus thermophilus (strain ATCC BAA-491 / LMD-9).